The primary structure comprises 450 residues: tRNA-2-methylthio-N(6)-dimethylallyladenosine synthase (450 aa).

Residues 8–128 (KRLYIKTYGC…LPELIARAHR (121 aa)) form the MTTase N-terminal domain. 6 residues coordinate [4Fe-4S] cluster: cysteine 17, cysteine 53, cysteine 91, cysteine 166, cysteine 170, and cysteine 173. The Radical SAM core domain occupies 152–382 (RPTGVTAFLT…QALLEQQQLA (231 aa)). Residues 385-447 (AAQAGRVLPV…RNSLAGVLEL (63 aa)) form the TRAM domain.

The protein belongs to the methylthiotransferase family. MiaB subfamily. Monomer. The cofactor is [4Fe-4S] cluster.

It localises to the cytoplasm. It catalyses the reaction N(6)-dimethylallyladenosine(37) in tRNA + (sulfur carrier)-SH + AH2 + 2 S-adenosyl-L-methionine = 2-methylsulfanyl-N(6)-dimethylallyladenosine(37) in tRNA + (sulfur carrier)-H + 5'-deoxyadenosine + L-methionine + A + S-adenosyl-L-homocysteine + 2 H(+). Its function is as follows. Catalyzes the methylthiolation of N6-(dimethylallyl)adenosine (i(6)A), leading to the formation of 2-methylthio-N6-(dimethylallyl)adenosine (ms(2)i(6)A) at position 37 in tRNAs that read codons beginning with uridine. The chain is tRNA-2-methylthio-N(6)-dimethylallyladenosine synthase from Phenylobacterium zucineum (strain HLK1).